The chain runs to 189 residues: MKELKPAILMLIIFTILCGGIYPAVVTGIAQAVFPKQAKGSLITDARGREVGSTLIGQPFSGPKYFWPRPSATPEFGYNPAGSGGSNAGPANPAYLKTVGERIKALRDAGIKGSIPADLVQASASGLDPHISPEAAKVQIPRVARARGMSAGALSRLIAAHTEDRQLGFLGEPRINVLALNLALDTLMP.

A helical membrane pass occupies residues 6 to 26 (PAILMLIIFTILCGGIYPAVV).

The protein belongs to the KdpC family. As to quaternary structure, the system is composed of three essential subunits: KdpA, KdpB and KdpC.

It is found in the cell inner membrane. Functionally, part of the high-affinity ATP-driven potassium transport (or Kdp) system, which catalyzes the hydrolysis of ATP coupled with the electrogenic transport of potassium into the cytoplasm. This subunit acts as a catalytic chaperone that increases the ATP-binding affinity of the ATP-hydrolyzing subunit KdpB by the formation of a transient KdpB/KdpC/ATP ternary complex. In Geobacter sulfurreducens (strain ATCC 51573 / DSM 12127 / PCA), this protein is Potassium-transporting ATPase KdpC subunit.